Reading from the N-terminus, the 112-residue chain is MTALSNMKCEACQADAPKVTDEELAELIRMIPDWGVQVRDGVMQLERIYKFKNFKLAMAFTNKLADLAEEEFHHPGIFTEWGKVTVTWWSHSIKGLHKNDFIMAAKTDQLLV.

It belongs to the pterin-4-alpha-carbinolamine dehydratase family.

The enzyme catalyses (4aS,6R)-4a-hydroxy-L-erythro-5,6,7,8-tetrahydrobiopterin = (6R)-L-erythro-6,7-dihydrobiopterin + H2O. This chain is Putative pterin-4-alpha-carbinolamine dehydratase, found in Shewanella baltica (strain OS155 / ATCC BAA-1091).